A 376-amino-acid polypeptide reads, in one-letter code: Peroxisomal targeting signal 2 receptor (376 aa).

6 WD repeats span residues 58–98 (DTQD…YPVM), 102–142 (EHQR…NTSL), 182–222 (DNND…PLFM), 226–267 (AHNG…PNVH), 279–319 (GHEF…TSRV), and 339–376 (AHTE…QRLQ).

Belongs to the WD repeat peroxin-7 family. Interacts with PEX20. In terms of processing, polyubiquitinated, leading to its degradation by the proteasome. Ubiquitination is dependent of PEX5 and PEX20 and takes place following recycling into the cytosol.

The protein localises to the cytoplasm. The protein resides in the cytosol. Its subcellular location is the peroxisome matrix. Functionally, receptor required for the peroxisomal import of proteins containing a C-terminal PTS2-type peroxisomal targeting signal, such as 3-oxoacyl-CoA thiolase. Specifically binds to cargo proteins containing a PTS2 peroxisomal targeting signal in the cytosol. Cargo protein-binding triggers interaction with PEX20 and formation of a ternary complex composed of PEX20 and PEX7 along with PTS2-containing cargo proteins, which is tranlocated into peroxisomes by passing through the peroxisomal docking complex. PEX7 receptor is then retrotranslocated into the cytosol, where it is ubiquitinated and degraded. In Komagataella phaffii (strain GS115 / ATCC 20864) (Yeast), this protein is Peroxisomal targeting signal 2 receptor.